A 600-amino-acid chain; its full sequence is Threonine dehydratase, mitochondrial (600 aa).

K144 carries the post-translational modification N6-(pyridoxal phosphate)lysine. ACT-like domains follow at residues 425 to 497 and 519 to 590; these read VFLS…DISD and RLYR…DETN.

Belongs to the serine/threonine dehydratase family. In terms of assembly, homotetramer. The cofactor is pyridoxal 5'-phosphate.

The protein resides in the mitochondrion. It is found in the cytoplasm. It carries out the reaction L-threonine = 2-oxobutanoate + NH4(+). The protein operates within amino-acid biosynthesis; L-isoleucine biosynthesis; 2-oxobutanoate from L-threonine: step 1/1. Isoleucine allosterically inhibits while valine allosterically activates this enzyme. This is Threonine dehydratase, mitochondrial from Schizosaccharomyces pombe (strain 972 / ATCC 24843) (Fission yeast).